Reading from the N-terminus, the 370-residue chain is Holliday junction branch migration complex subunit RuvB 2 (370 aa).

Positions 1–54 (MAIISSRAAGAEDPGQRQQKSSARRRESKLAFARAEGLLQPQAHPSEAQEESLR) are disordered. Positions 13–214 (DPGQRQQKSS…FGQVQRLRFY (202 aa)) are large ATPase domain (RuvB-L). Residues leucine 53, arginine 54, glycine 95, lysine 98, threonine 99, threonine 100, 161–163 (EDF), arginine 204, tyrosine 214, and arginine 251 contribute to the ATP site. Threonine 99 contributes to the Mg(2+) binding site. The segment at 215–285 (EPHELAEIVL…VAAAALELFQ (71 aa)) is small ATPAse domain (RuvB-S). Positions 288–370 (PMGLDWTDRK…TAQSPLPVWS (83 aa)) are head domain (RuvB-H). 2 residues coordinate DNA: arginine 343 and arginine 348.

Belongs to the RuvB family. In terms of assembly, homohexamer. Forms an RuvA(8)-RuvB(12)-Holliday junction (HJ) complex. HJ DNA is sandwiched between 2 RuvA tetramers; dsDNA enters through RuvA and exits via RuvB. An RuvB hexamer assembles on each DNA strand where it exits the tetramer. Each RuvB hexamer is contacted by two RuvA subunits (via domain III) on 2 adjacent RuvB subunits; this complex drives branch migration. In the full resolvosome a probable DNA-RuvA(4)-RuvB(12)-RuvC(2) complex forms which resolves the HJ.

It localises to the cytoplasm. The enzyme catalyses ATP + H2O = ADP + phosphate + H(+). Functionally, the RuvA-RuvB-RuvC complex processes Holliday junction (HJ) DNA during genetic recombination and DNA repair, while the RuvA-RuvB complex plays an important role in the rescue of blocked DNA replication forks via replication fork reversal (RFR). RuvA specifically binds to HJ cruciform DNA, conferring on it an open structure. The RuvB hexamer acts as an ATP-dependent pump, pulling dsDNA into and through the RuvAB complex. RuvB forms 2 homohexamers on either side of HJ DNA bound by 1 or 2 RuvA tetramers; 4 subunits per hexamer contact DNA at a time. Coordinated motions by a converter formed by DNA-disengaged RuvB subunits stimulates ATP hydrolysis and nucleotide exchange. Immobilization of the converter enables RuvB to convert the ATP-contained energy into a lever motion, pulling 2 nucleotides of DNA out of the RuvA tetramer per ATP hydrolyzed, thus driving DNA branch migration. The RuvB motors rotate together with the DNA substrate, which together with the progressing nucleotide cycle form the mechanistic basis for DNA recombination by continuous HJ branch migration. Branch migration allows RuvC to scan DNA until it finds its consensus sequence, where it cleaves and resolves cruciform DNA. The sequence is that of Holliday junction branch migration complex subunit RuvB 2 from Synechococcus sp. (strain JA-3-3Ab) (Cyanobacteria bacterium Yellowstone A-Prime).